The following is a 405-amino-acid chain: 4-hydroxy-3-methylbut-2-en-1-yl diphosphate synthase (flavodoxin) (405 aa).

[4Fe-4S] cluster contacts are provided by cysteine 297, cysteine 300, cysteine 343, and glutamate 350.

Belongs to the IspG family. [4Fe-4S] cluster is required as a cofactor.

It catalyses the reaction (2E)-4-hydroxy-3-methylbut-2-enyl diphosphate + oxidized [flavodoxin] + H2O + 2 H(+) = 2-C-methyl-D-erythritol 2,4-cyclic diphosphate + reduced [flavodoxin]. The protein operates within isoprenoid biosynthesis; isopentenyl diphosphate biosynthesis via DXP pathway; isopentenyl diphosphate from 1-deoxy-D-xylulose 5-phosphate: step 5/6. Its function is as follows. Converts 2C-methyl-D-erythritol 2,4-cyclodiphosphate (ME-2,4cPP) into 1-hydroxy-2-methyl-2-(E)-butenyl 4-diphosphate. This is 4-hydroxy-3-methylbut-2-en-1-yl diphosphate synthase (flavodoxin) from Francisella tularensis subsp. tularensis (strain FSC 198).